The following is a 307-amino-acid chain: Ribonuclease Z (307 aa).

Zn(2+) contacts are provided by histidine 62, histidine 64, aspartate 66, histidine 67, histidine 139, aspartate 210, and histidine 268. Catalysis depends on aspartate 66, which acts as the Proton acceptor.

Belongs to the RNase Z family. In terms of assembly, homodimer. It depends on Zn(2+) as a cofactor.

It carries out the reaction Endonucleolytic cleavage of RNA, removing extra 3' nucleotides from tRNA precursor, generating 3' termini of tRNAs. A 3'-hydroxy group is left at the tRNA terminus and a 5'-phosphoryl group is left at the trailer molecule.. Its function is as follows. Zinc phosphodiesterase, which displays some tRNA 3'-processing endonuclease activity. Probably involved in tRNA maturation, by removing a 3'-trailer from precursor tRNA. This is Ribonuclease Z from Myxococcus xanthus (strain DK1622).